A 409-amino-acid chain; its full sequence is MAAAERLSAAQETQMTLLEKPSFDLKDHISYYGALRTENTIFYAARKKGLTSLGHCPVPTLATAAANAKAAIEMQLLLKDLLRSPFAKNDWSLNDVSHERYKAPPSDTLKRKPRIVEVIFDKDPQNKTWYTLWDEVYVCTVDGWTLTTSGADATGIFVNMQGSRQYYELFGEDAQRFGTSGTWEVIDQNQRFHFPPSSRADTTDGLPGLQEEPRGGDGPTCSGPAPAIPDSPSRCLSRGFAGRDPGCHRNRHRVHPYILSGGQRILVTSSSSSTVQGPLSSGSSQHSQSRGRPPSPDSTETERARTPVNSDRQRAGEFDLLKGGCRPCCLIEGNGNKVKCLRFRLKKSHRSRFLDITTTFWATGDEGSDRQGNGTILITFTDTTQRDLFLGSVSIPGELSVRRITISTD.

The transactivation domain stretch occupies residues 1–199 (MAAAERLSAA…QRFHFPPSSR (199 aa)). 2 disordered regions span residues 192–251 (FHFP…HRNR) and 269–315 (SSSS…RQRA). Low complexity predominate over residues 276-292 (QGPLSSGSSQHSQSRGR). Over residues 300-315 (ETERARTPVNSDRQRA) the composition is skewed to basic and acidic residues. The DNA-binding domain stretch occupies residues 325–409 (CRPCCLIEGN…SVRRITISTD (85 aa)).

The protein belongs to the papillomaviridae E2 protein family. Binds DNA as homodimer. Interacts with protein E1; this interaction greatly increases E1 DNA-binding activity. Interacts with protein L1; this interaction enhances E2-dependent replication and transcription activation. Interacts with protein L2; this interaction inhibits E2 transcriptional activity but not DNA replication function E2. Interacts with protein E7; this interaction inhibits E7 oncogenic activity. Interacts with host TAF1; this interaction modulates E2-dependent transcriptional regulation. Interacts with host BRD4; this interaction mediates E2 transcriptional activation function. Additionally, the interaction with host BRD4 on mitotic chromosomes mediates tethering of the viral genome. Interacts with host TOPBP1; this interaction is required for optimal viral DNA replication. Post-translationally, phosphorylated.

The protein localises to the host nucleus. Plays a role in the initiation of viral DNA replication. A dimer of E2 interacts with a dimer of E1 in order to improve specificity of E1 DNA binding activity. Once the complex recognizes and binds DNA at specific sites, the E2 dimer is removed from DNA. E2 also regulates viral transcription through binding to the E2RE response element (5'-ACCNNNNNNGGT-3') present in multiple copies in the regulatory regions of the viral genome. Activates or represses transcription depending on E2RE's position with regards to proximal promoter elements including the TATA-box. Repression occurs by sterically hindering the assembly of the transcription initiation complex. This Bovine papillomavirus type 5 protein is Regulatory protein E2.